The primary structure comprises 41 residues: GTPCKCHGYIGVYWFMLAGCPNGYGYNLSCPYFLGICCVDR.

Intrachain disulfides connect Cys4–Cys37, Cys6–Cys30, and Cys20–Cys38.

Belongs to the sea anemone type 3 (BDS) potassium channel toxin family.

It is found in the secreted. Its subcellular location is the nematocyst. In terms of biological role, weakly inhibits human homomeric ASIC3 (IC(50)=5.5 uM). The polypeptide is Pi-stichotoxin-Hcr5a (Radianthus crispa (Leathery sea anemone)).